The chain runs to 273 residues: Protein ALUMINUM SENSITIVE 3 (273 aa).

7 helical membrane-spanning segments follow: residues 14–34 (WLIV…VVLL), 51–71 (IYSV…LQFI), 76–96 (NSGW…YTAG), 107–127 (YVAG…LVLL), 136–156 (YMIP…GVTM), 191–213 (ALVI…SLPG), and 228–248 (AIQL…VSSI).

This sequence belongs to the UPF0014 family. Expressed in roots, leaves, stems, and flowers.

The protein localises to the cell membrane. In terms of biological role, required for aluminum (Al) resistance/tolerance, probably by translocating Al from sensitive tissues such as growing roots to tissues less sensisitive to the toxic effects of Al. This Arabidopsis thaliana (Mouse-ear cress) protein is Protein ALUMINUM SENSITIVE 3 (ALS3).